Reading from the N-terminus, the 182-residue chain is Ribosome-recycling factor (182 aa).

Belongs to the RRF family.

Its subcellular location is the cytoplasm. Its function is as follows. Responsible for the release of ribosomes from messenger RNA at the termination of protein biosynthesis. May increase the efficiency of translation by recycling ribosomes from one round of translation to another. This is Ribosome-recycling factor from Mycoplasma capricolum subsp. capricolum (strain California kid / ATCC 27343 / NCTC 10154).